Here is a 319-residue protein sequence, read N- to C-terminus: Acetyl-coenzyme A carboxylase carboxyl transferase subunit alpha (319 aa).

A CoA carboxyltransferase C-terminal domain is found at 35-296 (NLDEEVQRLR…KAQLLADLND (262 aa)).

The protein belongs to the AccA family. As to quaternary structure, acetyl-CoA carboxylase is a heterohexamer composed of biotin carboxyl carrier protein (AccB), biotin carboxylase (AccC) and two subunits each of ACCase subunit alpha (AccA) and ACCase subunit beta (AccD).

It is found in the cytoplasm. It carries out the reaction N(6)-carboxybiotinyl-L-lysyl-[protein] + acetyl-CoA = N(6)-biotinyl-L-lysyl-[protein] + malonyl-CoA. Its pathway is lipid metabolism; malonyl-CoA biosynthesis; malonyl-CoA from acetyl-CoA: step 1/1. Component of the acetyl coenzyme A carboxylase (ACC) complex. First, biotin carboxylase catalyzes the carboxylation of biotin on its carrier protein (BCCP) and then the CO(2) group is transferred by the carboxyltransferase to acetyl-CoA to form malonyl-CoA. This chain is Acetyl-coenzyme A carboxylase carboxyl transferase subunit alpha, found in Yersinia pseudotuberculosis serotype O:3 (strain YPIII).